A 201-amino-acid polypeptide reads, in one-letter code: dITP/XTP pyrophosphatase (201 aa).

7–12 (TNNKGK) is a binding site for substrate. Residues Glu-40 and Asp-69 each coordinate Mg(2+). Asp-69 serves as the catalytic Proton acceptor. Substrate contacts are provided by residues Ser-70, 152 to 155 (FGYD), Lys-175, and 180 to 181 (HR).

This sequence belongs to the HAM1 NTPase family. Homodimer. It depends on Mg(2+) as a cofactor.

The catalysed reaction is XTP + H2O = XMP + diphosphate + H(+). It catalyses the reaction dITP + H2O = dIMP + diphosphate + H(+). It carries out the reaction ITP + H2O = IMP + diphosphate + H(+). Pyrophosphatase that catalyzes the hydrolysis of nucleoside triphosphates to their monophosphate derivatives, with a high preference for the non-canonical purine nucleotides XTP (xanthosine triphosphate), dITP (deoxyinosine triphosphate) and ITP. Seems to function as a house-cleaning enzyme that removes non-canonical purine nucleotides from the nucleotide pool, thus preventing their incorporation into DNA/RNA and avoiding chromosomal lesions. This is dITP/XTP pyrophosphatase from Desulforamulus reducens (strain ATCC BAA-1160 / DSM 100696 / MI-1) (Desulfotomaculum reducens).